A 303-amino-acid chain; its full sequence is Uracil phosphoribosyltransferase (303 aa).

Residues 1–86 (MHIIMKTILA…RYVSSTPTDS (86 aa)) are unknown. The tract at residues 87–303 (LSSKPLAAVY…DRLCGTSNPS (217 aa)) is UPRTase. Residues Arg170, Arg195, and 222–230 (DPMLATGGS) each bind 5-phospho-alpha-D-ribose 1-diphosphate. Uracil contacts are provided by residues Ile285 and 290 to 292 (GDA). Asp291 contributes to the 5-phospho-alpha-D-ribose 1-diphosphate binding site.

The protein belongs to the UPRTase family. Requires Mg(2+) as cofactor.

The enzyme catalyses UMP + diphosphate = 5-phospho-alpha-D-ribose 1-diphosphate + uracil. Its pathway is pyrimidine metabolism; UMP biosynthesis via salvage pathway; UMP from uracil: step 1/1. With respect to regulation, allosterically activated by GTP. Catalyzes the conversion of uracil and 5-phospho-alpha-D-ribose 1-diphosphate (PRPP) to UMP and diphosphate. The protein is Uracil phosphoribosyltransferase (upp) of Chlamydia muridarum (strain MoPn / Nigg).